The following is a 455-amino-acid chain: ATP-dependent protease ATPase subunit HslU (455 aa).

ATP is bound by residues isoleucine 19, glycine 61–glutamate 66, aspartate 268, glutamate 333, and arginine 405.

The protein belongs to the ClpX chaperone family. HslU subfamily. In terms of assembly, a double ring-shaped homohexamer of HslV is capped on each side by a ring-shaped HslU homohexamer. The assembly of the HslU/HslV complex is dependent on binding of ATP.

Its subcellular location is the cytoplasm. Its function is as follows. ATPase subunit of a proteasome-like degradation complex; this subunit has chaperone activity. The binding of ATP and its subsequent hydrolysis by HslU are essential for unfolding of protein substrates subsequently hydrolyzed by HslV. HslU recognizes the N-terminal part of its protein substrates and unfolds these before they are guided to HslV for hydrolysis. The polypeptide is ATP-dependent protease ATPase subunit HslU (Francisella philomiragia subsp. philomiragia (strain ATCC 25017 / CCUG 19701 / FSC 153 / O#319-036)).